A 380-amino-acid polypeptide reads, in one-letter code: Chaperone protein DnaJ (380 aa).

A J domain is found at 5 to 70; it reads DYYEILGVTK…QKRAAYDRFG (66 aa). The CR-type zinc finger occupies 137-215; that stretch reads GKAETIKIPT…CQGAGRVNRE (79 aa). Residues Cys150, Cys153, Cys167, Cys170, Cys189, Cys192, Cys203, and Cys206 each contribute to the Zn(2+) site. CXXCXGXG motif repeat units lie at residues 150–157, 167–174, 189–196, and 203–210; these read CEVCDGSG, CPTCAGYG, CPNCHGRG, and CTACQGAG.

This sequence belongs to the DnaJ family. As to quaternary structure, homodimer. Zn(2+) serves as cofactor.

It localises to the cytoplasm. Functionally, participates actively in the response to hyperosmotic and heat shock by preventing the aggregation of stress-denatured proteins and by disaggregating proteins, also in an autonomous, DnaK-independent fashion. Unfolded proteins bind initially to DnaJ; upon interaction with the DnaJ-bound protein, DnaK hydrolyzes its bound ATP, resulting in the formation of a stable complex. GrpE releases ADP from DnaK; ATP binding to DnaK triggers the release of the substrate protein, thus completing the reaction cycle. Several rounds of ATP-dependent interactions between DnaJ, DnaK and GrpE are required for fully efficient folding. Also involved, together with DnaK and GrpE, in the DNA replication of plasmids through activation of initiation proteins. The sequence is that of Chaperone protein DnaJ from Methylobacterium radiotolerans (strain ATCC 27329 / DSM 1819 / JCM 2831 / NBRC 15690 / NCIMB 10815 / 0-1).